Reading from the N-terminus, the 55-residue chain is Large ribosomal subunit protein bL32c (55 aa).

This sequence belongs to the bacterial ribosomal protein bL32 family.

It localises to the plastid. Its subcellular location is the chloroplast. In Atropa belladonna (Belladonna), this protein is Large ribosomal subunit protein bL32c.